The primary structure comprises 518 residues: Glutamate--cysteine ligase (518 aa).

The protein belongs to the glutamate--cysteine ligase type 1 family. Type 1 subfamily.

The enzyme catalyses L-cysteine + L-glutamate + ATP = gamma-L-glutamyl-L-cysteine + ADP + phosphate + H(+). The protein operates within sulfur metabolism; glutathione biosynthesis; glutathione from L-cysteine and L-glutamate: step 1/2. The protein is Glutamate--cysteine ligase of Escherichia coli O157:H7.